A 78-amino-acid chain; its full sequence is DNA-directed RNA polymerase subunit Rpo5 (78 aa).

It belongs to the archaeal Rpo5/eukaryotic RPB5 RNA polymerase subunit family. As to quaternary structure, part of the RNA polymerase complex.

The protein localises to the cytoplasm. It catalyses the reaction RNA(n) + a ribonucleoside 5'-triphosphate = RNA(n+1) + diphosphate. Its function is as follows. DNA-dependent RNA polymerase (RNAP) catalyzes the transcription of DNA into RNA using the four ribonucleoside triphosphates as substrates. In Methanococcus maripaludis (strain C7 / ATCC BAA-1331), this protein is DNA-directed RNA polymerase subunit Rpo5.